The chain runs to 250 residues: Cell division protein FtsQ (250 aa).

Residues 1–11 (MWNNVRQLNLA) lie on the Cytoplasmic side of the membrane. A helical transmembrane segment spans residues 12–32 (ASALYALLLLVLAAAGCYWLI). The Periplasmic portion of the chain corresponds to 33 to 250 (QRPAFALREI…FLTDTDKGKK (218 aa)). The 70-residue stretch at 37–106 (FALREIRIDG…NALAVTLEEY (70 aa)) folds into the POTRA domain.

This sequence belongs to the FtsQ/DivIB family. FtsQ subfamily. In terms of assembly, part of a complex composed of FtsB, FtsL and FtsQ.

The protein resides in the cell inner membrane. Functionally, essential cell division protein. May link together the upstream cell division proteins, which are predominantly cytoplasmic, with the downstream cell division proteins, which are predominantly periplasmic. May control correct divisome assembly. The protein is Cell division protein FtsQ of Burkholderia pseudomallei (strain K96243).